We begin with the raw amino-acid sequence, 331 residues long: Biotin synthase (331 aa).

A Radical SAM core domain is found at 52-277 (PEVEVEGIVS…RTILRYAGGR (226 aa)). [4Fe-4S] cluster is bound by residues C67, C71, and C74. C110, C202, and R272 together coordinate [2Fe-2S] cluster.

It belongs to the radical SAM superfamily. Biotin synthase family. In terms of assembly, homodimer. [4Fe-4S] cluster is required as a cofactor. [2Fe-2S] cluster serves as cofactor.

It carries out the reaction (4R,5S)-dethiobiotin + (sulfur carrier)-SH + 2 reduced [2Fe-2S]-[ferredoxin] + 2 S-adenosyl-L-methionine = (sulfur carrier)-H + biotin + 2 5'-deoxyadenosine + 2 L-methionine + 2 oxidized [2Fe-2S]-[ferredoxin]. It participates in cofactor biosynthesis; biotin biosynthesis; biotin from 7,8-diaminononanoate: step 2/2. In terms of biological role, catalyzes the conversion of dethiobiotin (DTB) to biotin by the insertion of a sulfur atom into dethiobiotin via a radical-based mechanism. The chain is Biotin synthase from Salinispora tropica (strain ATCC BAA-916 / DSM 44818 / JCM 13857 / NBRC 105044 / CNB-440).